The sequence spans 313 residues: Tyrosine recombinase XerC (313 aa).

Positions 1 to 85 (MNDQVEAFLR…AVKSFFAFLT (85 aa)) constitute a Core-binding (CB) domain. Residues 106–291 (DLPRALTPHQ…NHASSAQPVR (186 aa)) form the Tyr recombinase domain. Catalysis depends on residues R147, K171, H243, R246, and H269. The active-site O-(3'-phospho-DNA)-tyrosine intermediate is Y278.

This sequence belongs to the 'phage' integrase family. XerC subfamily. In terms of assembly, forms a cyclic heterotetrameric complex composed of two molecules of XerC and two molecules of XerD.

Its subcellular location is the cytoplasm. Site-specific tyrosine recombinase, which acts by catalyzing the cutting and rejoining of the recombining DNA molecules. The XerC-XerD complex is essential to convert dimers of the bacterial chromosome into monomers to permit their segregation at cell division. It also contributes to the segregational stability of plasmids. The chain is Tyrosine recombinase XerC from Roseiflexus sp. (strain RS-1).